We begin with the raw amino-acid sequence, 60 residues long: Large ribosomal subunit protein uL30 (60 aa).

Belongs to the universal ribosomal protein uL30 family. As to quaternary structure, part of the 50S ribosomal subunit.

In Mycobacteroides abscessus (strain ATCC 19977 / DSM 44196 / CCUG 20993 / CIP 104536 / JCM 13569 / NCTC 13031 / TMC 1543 / L948) (Mycobacterium abscessus), this protein is Large ribosomal subunit protein uL30.